Reading from the N-terminus, the 133-residue chain is Small ribosomal subunit protein uS8 (133 aa).

This sequence belongs to the universal ribosomal protein uS8 family. In terms of assembly, part of the 30S ribosomal subunit. Contacts proteins S5 and S12.

Functionally, one of the primary rRNA binding proteins, it binds directly to 16S rRNA central domain where it helps coordinate assembly of the platform of the 30S subunit. The sequence is that of Small ribosomal subunit protein uS8 from Synechococcus elongatus (strain ATCC 33912 / PCC 7942 / FACHB-805) (Anacystis nidulans R2).